The primary structure comprises 352 residues: N-terminal EF-hand calcium-binding protein 1 (352 aa).

Phosphoserine is present on S4. EF-hand domains follow at residues 26–61 and 60–95; these read KGMS…GVLS and LSGE…HLGE. D39, N41, D43, K45, and E50 together coordinate Ca(2+). Residues 135-163 adopt a coiled-coil conformation; the sequence is LLKETLNQLQSLQNSLECAMETTEEQTRQ. The tract at residues 155–202 is disordered; sequence ETTEEQTRQERQGPSKPEVLSIQWPGKRSSRRVQRHNSFSPNSPQFNV. Residues 190 to 202 show a composition bias toward polar residues; that stretch reads HNSFSPNSPQFNV. Phosphoserine occurs at positions 192 and 197. Residues 209–275 are a coiled coil; that stretch reads EEDNQWMTQI…EEFQLALKHY (67 aa). The ABM domain occupies 252 to 340; it reads MLVQRQMSVT…LETPELTSTM (89 aa).

As to quaternary structure, interacts with STX1. May interact with CPNE6. As to expression, expressed in brain (at protein level). Expressed in the cerebral cortex only in layer 4, thalamic nuclei (the mediodorsal nucleus), hippocampus (a small band of pyramidal neurons at the boundary between CA1 and CA3), interneurons interspersed throughout the hippocampus proper, interneurons in the hilus, bodies of the neurons but also their dendritic projections (at protein level).

The protein localises to the cytoplasm. This is N-terminal EF-hand calcium-binding protein 1 (Necab1) from Mus musculus (Mouse).